Here is a 140-residue protein sequence, read N- to C-terminus: Nucleoside diphosphate kinase (140 aa).

Positions 9, 57, 85, 91, 102, and 112 each coordinate ATP. His-115 (pros-phosphohistidine intermediate) is an active-site residue.

Belongs to the NDK family. As to quaternary structure, homotetramer. Requires Mg(2+) as cofactor.

Its subcellular location is the cytoplasm. It carries out the reaction a 2'-deoxyribonucleoside 5'-diphosphate + ATP = a 2'-deoxyribonucleoside 5'-triphosphate + ADP. The enzyme catalyses a ribonucleoside 5'-diphosphate + ATP = a ribonucleoside 5'-triphosphate + ADP. Major role in the synthesis of nucleoside triphosphates other than ATP. The ATP gamma phosphate is transferred to the NDP beta phosphate via a ping-pong mechanism, using a phosphorylated active-site intermediate. The chain is Nucleoside diphosphate kinase from Chlorobium limicola (strain DSM 245 / NBRC 103803 / 6330).